The following is a 285-amino-acid chain: 4-diphosphocytidyl-2-C-methyl-D-erythritol kinase (285 aa).

K10 is an active-site residue. 94–104 (PVAAGLGGGSS) contacts ATP. The active site involves D136.

It belongs to the GHMP kinase family. IspE subfamily.

The catalysed reaction is 4-CDP-2-C-methyl-D-erythritol + ATP = 4-CDP-2-C-methyl-D-erythritol 2-phosphate + ADP + H(+). It functions in the pathway isoprenoid biosynthesis; isopentenyl diphosphate biosynthesis via DXP pathway; isopentenyl diphosphate from 1-deoxy-D-xylulose 5-phosphate: step 3/6. Catalyzes the phosphorylation of the position 2 hydroxy group of 4-diphosphocytidyl-2C-methyl-D-erythritol. This chain is 4-diphosphocytidyl-2-C-methyl-D-erythritol kinase, found in Latilactobacillus sakei subsp. sakei (strain 23K) (Lactobacillus sakei subsp. sakei).